A 118-amino-acid polypeptide reads, in one-letter code: Large ribosomal subunit protein bL21c (118 aa).

This sequence belongs to the bacterial ribosomal protein bL21 family. As to quaternary structure, part of the 50S ribosomal subunit.

It localises to the plastid. The protein localises to the chloroplast. In terms of biological role, this protein binds to 23S rRNA. In Anthoceros angustus (Hornwort), this protein is Large ribosomal subunit protein bL21c.